The following is a 245-amino-acid chain: MMILKIGGSVITDKSAYRTARTYAIRSIVKVLSGIEDLVCVVHGGGSFGHIKAMEFGLPGPKNPRSSIGYSIVHRDMENLDLMVIDAMIEMGMRPISVPISALRYDGRFDYTPLIRYIDAGFVPVSYGDVYIKDEHSYGIYSGDDIMADMAELLKPDVAVFLTDVDGIYSKDPKRNPDAVLLRDIDTNITFDRVQNDVTGGIGKKFESMVKMKSSVKNGVYLINGNHPERIGDIGKESFIGTVIR.

5–9 (KIGGS) contributes to the ATP binding site. Gly-45 serves as a coordination point for substrate. Gly-46 contacts ATP. The substrate site is built by His-50 and Gly-143. Residues Asp-164, 169–174 (YSKDPK), Gly-201, and Lys-205 each bind ATP.

It belongs to the isopentenyl phosphate kinase family. Homodimer.

It carries out the reaction isopentenyl phosphate + ATP = isopentenyl diphosphate + ADP. In terms of biological role, catalyzes the formation of isopentenyl diphosphate (IPP), the building block of all isoprenoids. Has lower activity with isopentenyl thiolophosphate (ISP). Has low activity with dimethylallyl phosphate (DMAP), 1-butyl phosphate (BP) and 3-buten-1-yl phosphate (BEP). Has no significant activity with geranyl phosphate (in vitro). The protein is Isopentenyl phosphate kinase of Thermoplasma acidophilum (strain ATCC 25905 / DSM 1728 / JCM 9062 / NBRC 15155 / AMRC-C165).